Reading from the N-terminus, the 347-residue chain is Phenylalanine--tRNA ligase alpha subunit (347 aa).

Glutamate 265 is a binding site for Mg(2+).

Belongs to the class-II aminoacyl-tRNA synthetase family. Phe-tRNA synthetase alpha subunit type 1 subfamily. Tetramer of two alpha and two beta subunits. The cofactor is Mg(2+).

The protein localises to the cytoplasm. The enzyme catalyses tRNA(Phe) + L-phenylalanine + ATP = L-phenylalanyl-tRNA(Phe) + AMP + diphosphate + H(+). The chain is Phenylalanine--tRNA ligase alpha subunit from Mycolicibacterium vanbaalenii (strain DSM 7251 / JCM 13017 / BCRC 16820 / KCTC 9966 / NRRL B-24157 / PYR-1) (Mycobacterium vanbaalenii).